Here is a 110-residue protein sequence, read N- to C-terminus: Glutaredoxin-1 (110 aa).

Residues 7-110 (IKHVKDLIAE…EELLEPILAN (104 aa)) enclose the Glutaredoxin domain. A Glycyl lysine isopeptide (Lys-Gly) (interchain with G-Cter in ubiquitin) cross-link involves residue Lys-11. Residues 24–29 (KTYCPY), Gln-63, Val-75, and 88–89 (ND) contribute to the glutathione site. Cys-27 is modified (S-glutathionyl cysteine; alternate). Cys-27 and Cys-30 are disulfide-bonded.

Belongs to the glutaredoxin family.

It is found in the cytoplasm. Its subcellular location is the nucleus. It carries out the reaction 2 glutathione + H2O2 = glutathione disulfide + 2 H2O. The enzyme catalyses 1-chloro-2,4-dinitrobenzene + glutathione = 2,4-dinitrophenyl-S-glutathione + chloride + H(+). The catalysed reaction is RX + glutathione = an S-substituted glutathione + a halide anion + H(+). Its function is as follows. Component of the glutathione system which performs several activities such as glutathione-dependent oxidoreductase, glutathione peroxidase and glutathione S-transferase (GST) activity. The disulfide bond functions as an electron carrier in the glutathione-dependent synthesis of deoxyribonucleotides by the enzyme ribonucleotide reductase. In addition, it is also involved in reducing cytosolic protein- and non-protein-disulfides in a coupled system with glutathione reductase. Required for resistance to reactive oxygen species (ROS) by directly reducing hydroperoxides and for the detoxification of ROS-mediated damage. GRX1 is less active as an oxidoreductase than GRX2. This Saccharomyces cerevisiae (strain ATCC 204508 / S288c) (Baker's yeast) protein is Glutaredoxin-1 (GRX1).